We begin with the raw amino-acid sequence, 604 residues long: Integrin alpha-IIb (604 aa).

Residues 1–61 form an FG-GAP repeat; sequence QVLDSPFPTG…ASVQLLVQDS (61 aa). Residues 1 to 558 lie on the Extracellular side of the membrane; that stretch reads QVLDSPFPTG…TQLLRALEER (558 aa). Ca(2+)-binding residues include D22, D24, N26, Y28, and D30. Cystine bridges form between C69–C80 and C86–C141. The N-linked (GlcNAc...) asparagine glycan is linked to N166. 4 disulfides stabilise this stretch: C198/C204, C270/C283, C422/C486, and C476/C481. N276 is a glycosylation site (N-linked (GlcNAc...) asparagine). N-linked (GlcNAc...) asparagine glycosylation occurs at N527. The chain crosses the membrane as a helical span at residues 559-584; sequence AIPIWWVLVGVLGGLLLLTILVLAMW. Topologically, residues 585–604 are cytoplasmic; sequence KVGFFKRNRPPLEEDDEEGE. The GFFKR motif motif lies at 587–591; that stretch reads GFFKR.

This sequence belongs to the integrin alpha chain family. In terms of assembly, heterodimer of an alpha and a beta subunit. The alpha subunit is composed of a heavy and a light chain linked by a disulfide bond. Alpha-IIb associates with beta-3. Directly interacts with RNF181. Interacts (via C-terminus cytoplasmic tail region) with CIB1; the interaction is direct and calcium-dependent. Interacts (via C-terminus cytoplasmic tail region) with CIB2, CIB3 and CIB4; the interactions are stabilized/increased in a calcium and magnesium-dependent manner. ITGA2B:ITGB3 interacts with PPIA/CYPA; the interaction is ROS and PPIase activity-dependent and is increased in the presence of thrombin. ITGA2B:ITGB3 interacts with SELP (via C-type lectin domain); the interaction mediates cell-cell interaction and adhesion.

Its subcellular location is the membrane. In terms of biological role, integrin alpha-IIb/beta-3 is a receptor for fibronectin, fibrinogen, plasminogen, prothrombin, thrombospondin and vitronectin. It recognizes the sequence R-G-D in a wide array of ligands. It recognizes the sequence H-H-L-G-G-G-A-K-Q-A-G-D-V in fibrinogen gamma chain. Following activation integrin alpha-IIb/beta-3 brings about platelet/platelet interaction through binding of soluble fibrinogen. This step leads to rapid platelet aggregation which physically plugs ruptured endothelial cell surface. In Papio cynocephalus (Yellow baboon), this protein is Integrin alpha-IIb (ITGA2B).